Reading from the N-terminus, the 142-residue chain is Hemoglobin subunit alpha-1 (142 aa).

The Globin domain occupies 2-142; sequence KLTAEDKHNV…VAYVLASKYR (141 aa). Residue histidine 59 participates in O2 binding. Histidine 88 provides a ligand contact to heme b.

Belongs to the globin family. Major hemoglobin is a heterotetramer of two alpha-1 chains and two beta-1 chains. As to expression, red blood cells.

Functionally, involved in oxygen transport from the lung to the various peripheral tissues. This Pleurodeles waltl (Iberian ribbed newt) protein is Hemoglobin subunit alpha-1.